The chain runs to 76 residues: Conotoxin Vc6.6 (76 aa).

The first 22 residues, 1-22 (MKLTCMVIVAVLFLTANTFVTA), serve as a signal peptide directing secretion. A propeptide spanning residues 23 to 52 (VPHSSNALENLYLKAHHEMNNPKDSELNKR) is cleaved from the precursor. Intrachain disulfides connect Cys53–Cys67, Cys60–Cys71, and Cys66–Cys75.

This sequence belongs to the conotoxin O1 superfamily. Expressed by the venom duct.

The protein localises to the secreted. This chain is Conotoxin Vc6.6, found in Conus victoriae (Queen Victoria cone).